The chain runs to 377 residues: 3-dehydroquinate synthase (377 aa).

NAD(+) contacts are provided by residues 113–117 (GVIGD), 137–138 (TT), lysine 150, lysine 159, and 177–180 (FLDT). Glutamate 192, histidine 254, and histidine 273 together coordinate Zn(2+).

This sequence belongs to the sugar phosphate cyclases superfamily. Dehydroquinate synthase family. It depends on Co(2+) as a cofactor. Zn(2+) serves as cofactor. Requires NAD(+) as cofactor.

The protein resides in the cytoplasm. It carries out the reaction 7-phospho-2-dehydro-3-deoxy-D-arabino-heptonate = 3-dehydroquinate + phosphate. It functions in the pathway metabolic intermediate biosynthesis; chorismate biosynthesis; chorismate from D-erythrose 4-phosphate and phosphoenolpyruvate: step 2/7. In terms of biological role, catalyzes the conversion of 3-deoxy-D-arabino-heptulosonate 7-phosphate (DAHP) to dehydroquinate (DHQ). The polypeptide is 3-dehydroquinate synthase (Bartonella quintana (strain Toulouse) (Rochalimaea quintana)).